A 337-amino-acid polypeptide reads, in one-letter code: WAT1-related protein At1g11460 (337 aa).

10 helical membrane passes run 14–34 (WPPI…NALV), 46–66 (IIGA…AYIL), 83–103 (FISG…GLSY), 107–127 (TVAC…ALIL), 139–159 (AGMI…FLTF), 188–208 (WLLG…WILF), 220–240 (FSST…LSLY), 254–274 (FVIG…TVSV), 284–304 (VFVS…DFII), and 309–329 (LYLG…VFLW). Residues 27 to 157 (MGSVNALVKK…IICISGALFL (131 aa)) enclose the EamA 1 domain. An EamA 2 domain is found at 220–328 (FSSTCLMSIF…GTITGLYVFL (109 aa)).

The protein belongs to the drug/metabolite transporter (DMT) superfamily. Plant drug/metabolite exporter (P-DME) (TC 2.A.7.4) family.

It is found in the membrane. In Arabidopsis thaliana (Mouse-ear cress), this protein is WAT1-related protein At1g11460.